We begin with the raw amino-acid sequence, 318 residues long: Porphobilinogen deaminase (318 aa).

Cys-241 carries the post-translational modification S-(dipyrrolylmethanemethyl)cysteine.

It belongs to the HMBS family. In terms of assembly, monomer. Requires dipyrromethane as cofactor.

The catalysed reaction is 4 porphobilinogen + H2O = hydroxymethylbilane + 4 NH4(+). It functions in the pathway porphyrin-containing compound metabolism; protoporphyrin-IX biosynthesis; coproporphyrinogen-III from 5-aminolevulinate: step 2/4. Tetrapolymerization of the monopyrrole PBG into the hydroxymethylbilane pre-uroporphyrinogen in several discrete steps. The sequence is that of Porphobilinogen deaminase from Geobacter metallireducens (strain ATCC 53774 / DSM 7210 / GS-15).